The sequence spans 502 residues: Probable cytosol aminopeptidase 2 (502 aa).

Lys-269 and Asp-274 together coordinate Mn(2+). The active site involves Lys-281. Positions 292, 351, and 353 each coordinate Mn(2+). Residue Arg-355 is part of the active site.

It belongs to the peptidase M17 family. Mn(2+) is required as a cofactor.

It is found in the cytoplasm. It catalyses the reaction Release of an N-terminal amino acid, Xaa-|-Yaa-, in which Xaa is preferably Leu, but may be other amino acids including Pro although not Arg or Lys, and Yaa may be Pro. Amino acid amides and methyl esters are also readily hydrolyzed, but rates on arylamides are exceedingly low.. The enzyme catalyses Release of an N-terminal amino acid, preferentially leucine, but not glutamic or aspartic acids.. Its function is as follows. Presumably involved in the processing and regular turnover of intracellular proteins. Catalyzes the removal of unsubstituted N-terminal amino acids from various peptides. This is Probable cytosol aminopeptidase 2 (pepA2) from Shewanella oneidensis (strain ATCC 700550 / JCM 31522 / CIP 106686 / LMG 19005 / NCIMB 14063 / MR-1).